Consider the following 477-residue polypeptide: 3-isopropylmalate dehydratase large subunit 1 (477 aa).

[4Fe-4S] cluster-binding residues include cysteine 357, cysteine 417, and cysteine 420.

Belongs to the aconitase/IPM isomerase family. LeuC type 1 subfamily. Heterodimer of LeuC and LeuD. [4Fe-4S] cluster is required as a cofactor.

The enzyme catalyses (2R,3S)-3-isopropylmalate = (2S)-2-isopropylmalate. It functions in the pathway amino-acid biosynthesis; L-leucine biosynthesis; L-leucine from 3-methyl-2-oxobutanoate: step 2/4. Its function is as follows. Catalyzes the isomerization between 2-isopropylmalate and 3-isopropylmalate, via the formation of 2-isopropylmaleate. This is 3-isopropylmalate dehydratase large subunit 1 from Bradyrhizobium diazoefficiens (strain JCM 10833 / BCRC 13528 / IAM 13628 / NBRC 14792 / USDA 110).